The primary structure comprises 20 residues: Agglutinin beta-2 chain isoform 1 (20 aa).

Over residues 1-10 (TQSTGTSQTI) the composition is skewed to polar residues. Positions 1–20 (TQSTGTSQTIAVGLWGGPDN) are disordered.

The protein belongs to the jacalin lectin family. Tetramer of four alpha chains associated with two or four beta chains.

Alpha-methyl-D-mannoside and D-mannose specific lectin. Binds IgA. This is Agglutinin beta-2 chain isoform 1 from Morus nigra (Black mulberry).